The primary structure comprises 377 residues: Chaperone protein DnaJ (377 aa).

A J domain is found at Asp-5–Gly-70. The CR-type zinc-finger motif lies at Gly-133–Thr-211. Cys-146, Cys-149, Cys-163, Cys-166, Cys-185, Cys-188, Cys-199, and Cys-202 together coordinate Zn(2+). CXXCXGXG motif repeat units lie at residues Cys-146 to Gly-153, Cys-163 to Gly-170, Cys-185 to Gly-192, and Cys-199 to Gly-206.

This sequence belongs to the DnaJ family. Homodimer. Zn(2+) is required as a cofactor.

It is found in the cytoplasm. Its function is as follows. Participates actively in the response to hyperosmotic and heat shock by preventing the aggregation of stress-denatured proteins and by disaggregating proteins, also in an autonomous, DnaK-independent fashion. Unfolded proteins bind initially to DnaJ; upon interaction with the DnaJ-bound protein, DnaK hydrolyzes its bound ATP, resulting in the formation of a stable complex. GrpE releases ADP from DnaK; ATP binding to DnaK triggers the release of the substrate protein, thus completing the reaction cycle. Several rounds of ATP-dependent interactions between DnaJ, DnaK and GrpE are required for fully efficient folding. Also involved, together with DnaK and GrpE, in the DNA replication of plasmids through activation of initiation proteins. This Shewanella sp. (strain MR-4) protein is Chaperone protein DnaJ.